The following is a 445-amino-acid chain: Coronin-A (445 aa).

WD repeat units follow at residues 77–117 (GHKS…LTDS), 127–167 (GHKR…NLTT), 170–209 (GHSD…IVNE), and 259–299 (DSAS…PYIH). Residues 410-444 (KNEKELREEYEKLKIRVAYLESEIVKKDAKIKELT) are a coiled coil.

This sequence belongs to the WD repeat coronin family. As to quaternary structure, binds to F-actin.

It localises to the cell surface. Required for normal motility. Participates in cytokinesis. The polypeptide is Coronin-A (corA) (Dictyostelium discoideum (Social amoeba)).